Consider the following 173-residue polypeptide: MNTSQIVLMFCLVVGVAQTALALKEDDCEVCVKTVRRFADTLDDATKKDYKLIEADFKKFCKTQKNKEQRFCYYLGGLEESATGILNELSKPLSWSMPAEKVCEKLKKMDAQICDLRYDKQIDLNNVDLKKLKVRDLKKILNDWDENCEGCLEKSDFIKRIEELKPKYTRSEL.

The first 22 residues, 1-22, serve as a signal peptide directing secretion; the sequence is MNTSQIVLMFCLVVGVAQTALA. 4 disulfides stabilise this stretch: Cys-28-Cys-114, Cys-31-Cys-103, Cys-61-Cys-72, and Cys-148-Cys-151.

The protein belongs to the ARMET family.

Its subcellular location is the secreted. Required during the maturation of the embryonic nervous system for maintenance of neuronal and cuticular connectivity. Essential for maintenance of dopaminergic neurons and dopamine levels. This chain is Mesencephalic astrocyte-derived neurotrophic factor homolog, found in Drosophila grimshawi (Hawaiian fruit fly).